A 794-amino-acid polypeptide reads, in one-letter code: Phosphoenolpyruvate synthase (794 aa).

The Tele-phosphohistidine intermediate role is filled by His-422. Substrate is bound by residues Arg-512, Arg-579, Glu-681, Gly-702, Ser-703, Asn-704, and Asp-705. Glu-681 serves as a coordination point for Mg(2+). Position 705 (Asp-705) interacts with Mg(2+). The active-site Proton donor is Cys-752.

Belongs to the PEP-utilizing enzyme family. Requires Mg(2+) as cofactor.

The enzyme catalyses pyruvate + ATP + H2O = phosphoenolpyruvate + AMP + phosphate + 2 H(+). Its pathway is carbohydrate biosynthesis; gluconeogenesis. Its function is as follows. Catalyzes the phosphorylation of pyruvate to phosphoenolpyruvate. The chain is Phosphoenolpyruvate synthase (ppsA) from Neisseria meningitidis serogroup B (strain ATCC BAA-335 / MC58).